Reading from the N-terminus, the 719-residue chain is Polyribonucleotide nucleotidyltransferase (719 aa).

Mg(2+)-binding residues include D495 and D501. Positions 562–621 (PRRLSFRIDPELIGTVIGPGGRTIKGITERTNTKIDIEDTGIVTVASHDGAAAEEAQKII) constitute a KH domain. The region spanning 631-699 (GEYFDGKVTR…NRGRINLTLR (69 aa)) is the S1 motif domain. The disordered stretch occupies residues 699–719 (RGVPQDGSDPQPTVILPIGES).

The protein belongs to the polyribonucleotide nucleotidyltransferase family. The cofactor is Mg(2+).

The protein resides in the cytoplasm. The enzyme catalyses RNA(n+1) + phosphate = RNA(n) + a ribonucleoside 5'-diphosphate. Involved in mRNA degradation. Catalyzes the phosphorolysis of single-stranded polyribonucleotides processively in the 3'- to 5'-direction. This Synechococcus sp. (strain RCC307) protein is Polyribonucleotide nucleotidyltransferase.